We begin with the raw amino-acid sequence, 396 residues long: L-lactate dehydrogenase (396 aa).

Positions 1-380 (MIISAASDYR…TQDSLVQGLG (380 aa)) constitute an FMN hydroxy acid dehydrogenase domain. Substrate is bound at residue Tyr-24. 2 residues coordinate FMN: Ser-106 and Gln-127. Tyr-129 lines the substrate pocket. Thr-155 provides a ligand contact to FMN. Arg-164 contributes to the substrate binding site. Lys-251 contacts FMN. The active-site Proton acceptor is the His-275. Arg-278 is a substrate binding site. 306–330 (DSGIRNGLDVVRMIALGADTVLLGR) lines the FMN pocket.

It belongs to the FMN-dependent alpha-hydroxy acid dehydrogenase family. Requires FMN as cofactor.

The protein localises to the cell inner membrane. It carries out the reaction (S)-lactate + A = pyruvate + AH2. Its function is as follows. Catalyzes the conversion of L-lactate to pyruvate. Is coupled to the respiratory chain. The polypeptide is L-lactate dehydrogenase (Shigella dysenteriae serotype 1 (strain Sd197)).